A 483-amino-acid chain; its full sequence is Nuc-1 negative regulatory protein preg (483 aa).

Composition is skewed to low complexity over residues 1-32 (MLTR…PRPS), 60-80 (SSRR…PISI), and 176-200 (ASAL…AVAV). Disordered regions lie at residues 1 to 112 (MLTR…SRPQ), 164 to 234 (NTVG…SQGD), and 434 to 483 (CPEP…RHAT). Positions 435-473 (PEPEEADDEDEDEELDESDAIGDDDDDIDGEGGEREEET) are enriched in acidic residues.

This sequence belongs to the cyclin family.

Functionally, negative regulator, together with pgov, of the transcriptional activator nuc-1, which controls the expression of phosphorous acquisition enzymes. The protein is Nuc-1 negative regulatory protein preg (preg) of Neurospora crassa (strain ATCC 24698 / 74-OR23-1A / CBS 708.71 / DSM 1257 / FGSC 987).